The chain runs to 193 residues: Putative manganese efflux pump MntP (193 aa).

6 consecutive transmembrane segments (helical) span residues Ile3 to Val23, Ala41 to Val61, Asp69 to Leu89, Ala107 to Leu127, Ala130 to Ile150, and Leu164 to Cys184.

Belongs to the MntP (TC 9.B.29) family.

The protein localises to the cell inner membrane. Its function is as follows. Probably functions as a manganese efflux pump. The polypeptide is Putative manganese efflux pump MntP (Desulfovibrio desulfuricans (strain ATCC 27774 / DSM 6949 / MB)).